Reading from the N-terminus, the 384-residue chain is Cytochrome b (384 aa).

Transmembrane regions (helical) follow at residues Phe-32 to Met-52, Phe-75 to Ile-96, Trp-111 to Leu-131, and Phe-176 to Ile-196. 2 residues coordinate heme b: His-81 and His-95. 2 residues coordinate heme b: His-180 and His-194. His-199 contacts a ubiquinone. The next 4 membrane-spanning stretches (helical) occupy residues Ser-224–Met-244, Phe-286–His-306, Phe-318–Ser-338, and Phe-345–Leu-366.

Belongs to the cytochrome b family. The main subunits of complex b-c1 are: cytochrome b, cytochrome c1 and the Rieske protein. Requires heme b as cofactor.

The protein resides in the mitochondrion inner membrane. Functionally, component of the ubiquinol-cytochrome c reductase complex (complex III or cytochrome b-c1 complex) that is part of the mitochondrial respiratory chain. The b-c1 complex mediates electron transfer from ubiquinol to cytochrome c. Contributes to the generation of a proton gradient across the mitochondrial membrane that is then used for ATP synthesis. This Acropora tenuis (Purple tipped acropora) protein is Cytochrome b (MT-CYB).